The primary structure comprises 88 residues: MAHKKGTGSTRNGRDSNSKRLGVKAYGGEPVTAGSILIRQRGTSVLPGINVGKGKDDTLFALTDGIVTFETIRRGLKNRKRISVALTS.

The tract at residues 1-26 is disordered; it reads MAHKKGTGSTRNGRDSNSKRLGVKAY.

This sequence belongs to the bacterial ribosomal protein bL27 family.

This is Large ribosomal subunit protein bL27 from Prochlorococcus marinus (strain MIT 9211).